The chain runs to 270 residues: UPF0354 protein Bcer98_3354 (270 aa).

The protein belongs to the UPF0354 family.

This chain is UPF0354 protein Bcer98_3354, found in Bacillus cytotoxicus (strain DSM 22905 / CIP 110041 / 391-98 / NVH 391-98).